The chain runs to 563 residues: IQCJ-SCHIP1 readthrough transcript protein (563 aa).

The IQ domain maps to 47–67 (ESKVKIIQRAWREYLQRQEPL). Disordered stretches follow at residues 63-150 (RQEP…VSAL), 164-295 (VIDE…EPPV), 312-336 (FREQ…NERE), and 384-430 (SGSD…SLDD). Low complexity predominate over residues 76 to 87 (SVSSEKLSSSVS). The span at 88 to 97 (MNTFSDSSTP) shows a compositional bias: polar residues. Residues 108–143 (SDAGSSSSSSRASSQSNSTKVTPCSECKSSSSPGGS) are compositionally biased toward low complexity. The span at 168–182 (WAPEEDGEEEEEEDE) shows a compositional bias: acidic residues. Composition is skewed to basic and acidic residues over residues 183–199 (RDQR…REPG) and 229–238 (HQHDPQDLRH). The residue at position 193 (Ser-193) is a Phosphoserine. The span at 318–331 (RNQGQARTNSTSAQ) shows a compositional bias: polar residues. Positions 385-399 (GSDKDSDADDSKTET) are enriched in basic and acidic residues. Positions 400 to 411 (SLDTPLSPMSKQ) are enriched in polar residues. Positions 419–563 (DTTEEESESL…KHMAEKMPAK (145 aa)) are required for interaction with ankyrins. Acidic residues predominate over residues 420–430 (TTEEESESLDD). A coiled-coil region spans residues 500–534 (IGQLQVIVNDLHSQIESLNEELVQLLLIRDELHTE).

In terms of assembly, homooligomer (via coiled coil domain). Interacts (via IQ domain) with calmodulin; the interaction is direct and lost in presence of calcium. Interacts with ANK3 (via ANK repeats); required for localization at axon initial segments (AIS) and nodes of Ranvier. Interacts with SPTBN4. Interacts with KCNQ2 and KCNQ3. In terms of tissue distribution, highly expressed in brain and to a lower extent in heart and kidney.

It is found in the cell projection. It localises to the axon. The protein resides in the cytoplasm. Functionally, may play a role in action potential conduction in myelinated cells through the organization of molecular complexes at nodes of Ranvier and axon initial segments. May also play a role in axon outgrowth and guidance. The sequence is that of IQCJ-SCHIP1 readthrough transcript protein from Homo sapiens (Human).